The sequence spans 455 residues: O-acyltransferase pigD (455 aa).

The protein belongs to the trichothecene 3-O-acetyltransferase family.

The protein operates within secondary metabolite biosynthesis. In terms of biological role, O-acetyltransferase; part of the gene cluster that mediates the biosynthesis of azaphilone pigments (MonAzPs), a complex mixture of compounds with a common azaphilone skeleton very widely used as food colorants. Within the pathway, pigD directly transfers the fatty acyl chain from the beta-ketoacyl-ACP produced by the pigJ-pigK fatty acid synthase (FAS) to the C-4 alcohol. The first step of the pathway is performed by the nrPKS pigA that forms the hexaketide precursor from successive condensations of five malonyl-CoA units, with a simple acetyl-CoA starter unit. The role of esterase pigG is not clear, but it may play at most a supplementary role in the formation of the benzaldehyde produced by the pigA nrPKS. This very reactive benzaldehyde is intercepted by the pigC ketoreductase that to provide the first stable enzyme-free MonAzPs intermediate, 6-(4-hydroxy-2-oxopentyl)-3-methyl-2,4-dioxocyclohexane carbaldehyde, also known as M7PKS-1. The FAD-dependent monooxygenase pigN hydroxylates M7PKS-1 at C-4, which triggers the formation of the pyran ring. PigJ, pigK and pigD are involved in the acetylation of the pyran ring. PigJ and pigK form the two subunits of a dedicated fungal FAS that produces the side chain fatty acyl moiety of MonAzPs and pigD transfers the fatty acyl chain to the C-4 alcohol. PigM and pigO are involved in the elimination of the omega-1 alcohol. PigM acts as an O-acetyltransferase that synthesizes the putative O-11 acetyl intermediate whereas pigO eliminates acetic acid to yield an intermediate with a C10(11) double bond. The dehydration of the C-11 alcohol followed by the reduction of the C6(7) double bond by the NAD(P)H-dependent oxidoreductase pigE increases the electrophilicity of the C-5 ketone of the resulting acyl benzopyran. This in turn sets up the C-5 ketone for an intramolecular Knoevenagel aldol condensation with the C-20 enol of the side chain. This condensation affords the characteristic linear tricyclic carbon skeletons of the yellow pigments that serve as the common precursors for the classical yellow pigments monascin and ankaflavin, orange pigments rubopunctatin and monascorubrin, and red pigments ribropunctamine and monascorubramine. The FAD-dependent oxidoreductase pigF is especially invoved in the biosynthesis of orange and red pigments via desaturation of C6(7). The sequence is that of O-acyltransferase pigD from Monascus ruber (Mold).